The sequence spans 279 residues: Phycobilisome rod-core linker polypeptide CpcG1 (279 aa).

The region spanning 11–189 (SSQNQRVEGY…YWRDRQTLNA (179 aa)) is the PBS-linker domain.

The protein belongs to the phycobilisome linker protein family. As to quaternary structure, part of the phycobilisome, a hemidiscoidal structure that is composed of two distinct substructures: a core complex and a number of rods radiating from the core.

It localises to the cellular thylakoid membrane. Its function is as follows. Rod-core linker protein required for attachment of phycocyanin to allophycocyanin in cores of phycobilisomes. In terms of biological role, linker polypeptides determine the state of aggregation and the location of the disk-shaped phycobiliprotein units within the phycobilisome and modulate their spectroscopic properties in order to mediate a directed and optimal energy transfer. This is Phycobilisome rod-core linker polypeptide CpcG1 from Nostoc sp. (strain PCC 7120 / SAG 25.82 / UTEX 2576).